A 278-amino-acid polypeptide reads, in one-letter code: BPI fold-containing family A member 1 (278 aa).

A signal peptide spans 1 to 19 (MFLVGSLVVLCGLLAHSTA). 4 Repeat repeats span residues 23–28 (GLPLPL), 30–36 (QGPPLPL), 39–44 (GPPLPL), and 47–52 (GQLLPL). The 4 X 6 AA repeats of G-[LPQ]-[PL]-L-P-L stretch occupies residues 23–52 (GLPLPLGQGPPLPLNQGPPLPLNQGQLLPL). Residues 112–117 (LVGGLL) are important for surfactant activity and antibacterial properties. N182 and N228 each carry an N-linked (GlcNAc...) asparagine glycan. Residues C204 and C246 are joined by a disulfide bond.

This sequence belongs to the BPI/LBP/Plunc superfamily. Plunc family. As to quaternary structure, monomer. Interacts (via N-terminus) with SCNN1B, a subunit of the heterotrimeric epithelial sodium channel (ENaC); this inhibits proteolytic activation of ENaC. Detected in airway epithelia (trachea and lung) and in bronchoalveolar fluid (at protein level). Upper airways, nasopharyngeal epithelium and thymus. Highest expression in the trachea and progressive decrease from proximal (bronchial) to distal (bronchiolar) airways. No expression is detected in the terminal bronchioles, respiratory bronchioles or lung alveoli.

It localises to the secreted. Lipid-binding protein which shows high specificity for the surfactant phospholipid dipalmitoylphosphatidylcholine (DPPC). Plays a role in the innate immune responses of the upper airways. Reduces the surface tension in secretions from airway epithelia and inhibits the formation of biofilm by pathogenic Gram-negative bacteria, such as P.aeruginosa and K.pneumoniae. Negatively regulates proteolytic cleavage of SCNN1G, an event that is required for activation of the epithelial sodium channel (ENaC), and thereby contributes to airway surface liquid homeostasis and proper clearance of mucus. Plays a role in the airway inflammatory response after exposure to irritants. May attract macrophages and neutrophils. This Mus musculus (Mouse) protein is BPI fold-containing family A member 1 (Bpifa1).